Here is a 475-residue protein sequence, read N- to C-terminus: Exodeoxyribonuclease 7 large subunit (475 aa).

Belongs to the XseA family. In terms of assembly, heterooligomer composed of large and small subunits.

It is found in the cytoplasm. The catalysed reaction is Exonucleolytic cleavage in either 5'- to 3'- or 3'- to 5'-direction to yield nucleoside 5'-phosphates.. Functionally, bidirectionally degrades single-stranded DNA into large acid-insoluble oligonucleotides, which are then degraded further into small acid-soluble oligonucleotides. The polypeptide is Exodeoxyribonuclease 7 large subunit (Bartonella henselae (strain ATCC 49882 / DSM 28221 / CCUG 30454 / Houston 1) (Rochalimaea henselae)).